The chain runs to 101 residues: NAD(P)H-quinone oxidoreductase subunit 4L, chloroplastic (101 aa).

3 consecutive transmembrane segments (helical) span residues 2–22, 32–52, and 61–81; these read MLEHVLVLSAYLFSVGLYGLI, MCLELILNAVNINFVTFSDFF, and IFSIFVIAIAAAEAAIGLAIV.

The protein belongs to the complex I subunit 4L family. In terms of assembly, NDH is composed of at least 16 different subunits, 5 of which are encoded in the nucleus.

The protein localises to the plastid. The protein resides in the chloroplast thylakoid membrane. It catalyses the reaction a plastoquinone + NADH + (n+1) H(+)(in) = a plastoquinol + NAD(+) + n H(+)(out). The catalysed reaction is a plastoquinone + NADPH + (n+1) H(+)(in) = a plastoquinol + NADP(+) + n H(+)(out). Functionally, NDH shuttles electrons from NAD(P)H:plastoquinone, via FMN and iron-sulfur (Fe-S) centers, to quinones in the photosynthetic chain and possibly in a chloroplast respiratory chain. The immediate electron acceptor for the enzyme in this species is believed to be plastoquinone. Couples the redox reaction to proton translocation, and thus conserves the redox energy in a proton gradient. This Panax ginseng (Korean ginseng) protein is NAD(P)H-quinone oxidoreductase subunit 4L, chloroplastic.